Consider the following 127-residue polypeptide: Ribonuclease VapC9 (127 aa).

In terms of domain architecture, PINc spans Ile-2 to Thr-115. Residues Asp-5 and Asp-91 each contribute to the Mg(2+) site.

This sequence belongs to the PINc/VapC protein family. The cofactor is Mg(2+).

Its function is as follows. Toxic component of a type II toxin-antitoxin (TA) system. An RNase. The cognate antitoxin is VapB9. The polypeptide is Ribonuclease VapC9 (Mycobacterium tuberculosis (strain CDC 1551 / Oshkosh)).